A 1939-amino-acid polypeptide reads, in one-letter code: Myosin-4 (1939 aa).

In terms of domain architecture, Myosin N-terminal SH3-like spans 33 to 82 (DAKTSVFVVDPKESYVKAIVQSREGGKVTAKTEAGATVTVKEDQVFSMNP). A phosphothreonine mark is found at Thr-64 and Thr-69. Ser-79 carries the phosphoserine modification. Positions 86 to 782 (DKIEDMAMMT…LLGTLEEMRD (697 aa)) constitute a Myosin motor domain. Lys-130 bears the N6,N6,N6-trimethyllysine mark. 179–186 (GESGAGKT) provides a ligand contact to ATP. Position 389 is a phosphotyrosine (Tyr-389). The residue at position 391 (Thr-391) is a Phosphothreonine. Ser-392 bears the Phosphoserine mark. Thr-419 carries the phosphothreonine modification. The residue at position 424 (Tyr-424) is a Phosphotyrosine. Residue Ser-625 is modified to Phosphoserine. The tract at residues 659–681 (LNKLMTNLRSTHPHFVRCIIPNE) is actin-binding. The residue at position 757 (His-757) is a Pros-methylhistidine. Positions 761–775 (KFGHTKVFFKAGLLG) are actin-binding. Residue Thr-776 is modified to Phosphothreonine. In terms of domain architecture, IQ spans 785-814 (LAQLITRTQAICRGFLMRVEFRKMMERRES). Residues 843–1939 (LLKSAETEKE…EVHTKVISEE (1097 aa)) adopt a coiled-coil conformation. Ser-1092, Ser-1162, and Ser-1237 each carry phosphoserine. Thr-1241 is modified (phosphothreonine). At Ser-1243 the chain carries Phosphoserine. Thr-1255 is modified (phosphothreonine). A Phosphoserine modification is found at Ser-1261. Phosphothreonine is present on Thr-1265. The residue at position 1278 (Ser-1278) is a Phosphoserine. Thr-1286 is subject to Phosphothreonine. A phosphoserine mark is found at Ser-1288, Ser-1292, Ser-1303, Ser-1306, and Ser-1413. Tyr-1464 is subject to Phosphotyrosine. Phosphothreonine is present on Thr-1467. At Ser-1474 the chain carries Phosphoserine. At Tyr-1492 the chain carries Phosphotyrosine. Ser-1495 carries the post-translational modification Phosphoserine. At Thr-1501 the chain carries Phosphothreonine. Ser-1514 bears the Phosphoserine mark. A Phosphothreonine modification is found at Thr-1517. Ser-1542, Ser-1547, Ser-1554, Ser-1574, Ser-1600, Ser-1603, Ser-1714, and Ser-1726 each carry phosphoserine. Residues Thr-1730 and Thr-1736 each carry the phosphothreonine modification. Ser-1739 carries the post-translational modification Phosphoserine.

The protein belongs to the TRAFAC class myosin-kinesin ATPase superfamily. Myosin family. As to quaternary structure, muscle myosin is a hexameric protein that consists of 2 heavy chain subunits (MHC), 2 alkali light chain subunits (MLC) and 2 regulatory light chain subunits (MLC-2).

It localises to the cytoplasm. The protein resides in the myofibril. Its function is as follows. Muscle contraction. In Homo sapiens (Human), this protein is Myosin-4 (MYH4).